The chain runs to 305 residues: Coenzyme PQQ synthesis protein B (305 aa).

The protein belongs to the PqqB family.

Its pathway is cofactor biosynthesis; pyrroloquinoline quinone biosynthesis. Its function is as follows. May be involved in the transport of PQQ or its precursor to the periplasm. This chain is Coenzyme PQQ synthesis protein B, found in Cupriavidus taiwanensis (strain DSM 17343 / BCRC 17206 / CCUG 44338 / CIP 107171 / LMG 19424 / R1) (Ralstonia taiwanensis (strain LMG 19424)).